Reading from the N-terminus, the 185-residue chain is Ribosome-recycling factor (185 aa).

This sequence belongs to the RRF family.

Its subcellular location is the cytoplasm. Its function is as follows. Responsible for the release of ribosomes from messenger RNA at the termination of protein biosynthesis. May increase the efficiency of translation by recycling ribosomes from one round of translation to another. The chain is Ribosome-recycling factor from Streptomyces avermitilis (strain ATCC 31267 / DSM 46492 / JCM 5070 / NBRC 14893 / NCIMB 12804 / NRRL 8165 / MA-4680).